Here is a 481-residue protein sequence, read N- to C-terminus: MTTANQVQPSAESAVAGRVVRVIGPVVDVEFPRGQQPALFNALTVEVDLEAVAKTITLEVAQHLGDNLVRAVSMAPTDGLIRGAEVTDTGKPISVPVGDVVKGHVFNALGDCLDEPGLGRDGEQWGIHREPPAFDQLEGKTEILETGIKVIDLLTPYVKGGKIGLFGGAGVGKTVLIQEMITRIAREFSGTSVFAGVGERTREGTDLFLEMEEMGVLQDTALVFGQMDEPPGVRMRVALSGLTMAEYFRDVQNQDVLLFIDNIFRFTQAGSEVSTLLGRMPSAVGYQPTLADEMGVLQERITSTKGRSITSLQAVYVPADDYTDPAPATTFAHLDATTELDRSIASKGIYPAVNPLTSTSRILEPGIVGERHYEVAQRVIHILQKNKELQDIIAILGMDELSEEDKITVQRARRLERFLGQNFFVAEKFTGIPGSYVPLADTIDAFERICDGEFDAYPEQAFNGLGGLDDVEAAYKKMTEK.

167-174 (GGAGVGKT) serves as a coordination point for ATP.

The protein belongs to the ATPase alpha/beta chains family. F-type ATPases have 2 components, CF(1) - the catalytic core - and CF(0) - the membrane proton channel. CF(1) has five subunits: alpha(3), beta(3), gamma(1), delta(1), epsilon(1). CF(0) has three main subunits: a(1), b(2) and c(9-12). The alpha and beta chains form an alternating ring which encloses part of the gamma chain. CF(1) is attached to CF(0) by a central stalk formed by the gamma and epsilon chains, while a peripheral stalk is formed by the delta and b chains.

The protein resides in the cell membrane. It carries out the reaction ATP + H2O + 4 H(+)(in) = ADP + phosphate + 5 H(+)(out). Functionally, produces ATP from ADP in the presence of a proton gradient across the membrane. The catalytic sites are hosted primarily by the beta subunits. In Corynebacterium jeikeium (strain K411), this protein is ATP synthase subunit beta.